The following is a 178-amino-acid chain: N-alpha-acetyltransferase 20 (178 aa).

One can recognise an N-acetyltransferase domain in the interval Thr-2–Ser-157. The interval Asp-159 to Glu-178 is disordered.

This sequence belongs to the acetyltransferase family. ARD1 subfamily. Component of the N-terminal acetyltransferase B (NatB) complex which is composed of naa20 and naa25.

The protein resides in the cytoplasm. Its subcellular location is the nucleus. The catalysed reaction is N-terminal L-methionyl-L-asparaginyl-[protein] + acetyl-CoA = N-terminal N(alpha)-acetyl-L-methionyl-L-asparaginyl-[protein] + CoA + H(+). It carries out the reaction N-terminal L-methionyl-L-glutaminyl-[protein] + acetyl-CoA = N-terminal N(alpha)-acetyl-L-methionyl-L-glutaminyl-[protein] + CoA + H(+). The enzyme catalyses N-terminal L-methionyl-L-aspartyl-[protein] + acetyl-CoA = N-terminal N(alpha)-acetyl-L-methionyl-L-aspartyl-[protein] + CoA + H(+). It catalyses the reaction N-terminal L-methionyl-L-glutamyl-[protein] + acetyl-CoA = N-terminal N(alpha)-acetyl-L-methionyl-L-glutamyl-[protein] + CoA + H(+). In terms of biological role, catalytic subunit of the NatB complex which catalyzes acetylation of the N-terminal methionine residues of peptides beginning with Met-Asp, Met-Glu, Met-Asn and Met-Gln. Proteins with cell cycle functions are overrepresented in the pool of NatB substrates. Required for maintaining the structure and function of actomyosin fibers and for proper cellular migration. The chain is N-alpha-acetyltransferase 20 (naa20) from Xenopus laevis (African clawed frog).